A 541-amino-acid chain; its full sequence is Propionyl-CoA carboxylase beta chain, mitochondrial (541 aa).

A mitochondrion-targeting transit peptide spans 1 to 28 (MAAVIRIRAMAAGTRLRVLNCGLGTTIR). Residues 34-292 (PVSVNERIEN…SNQDPASIRE (259 aa)) enclose the CoA carboxyltransferase N-terminal domain. The carboxyltransferase stretch occupies residues 34–535 (PVSVNERIEN…SKKVHRPWRK (502 aa)). Ser-73 is modified (phosphoserine). N6-acetyllysine; alternate is present on Lys-101. At Lys-101 the chain carries N6-succinyllysine; alternate. Lys-250 carries the post-translational modification N6-succinyllysine. A CoA carboxyltransferase C-terminal domain is found at 296 to 535 (PSDRLVPELD…SKKVHRPWRK (240 aa)). The acyl-CoA binding stretch occupies residues 327-360 (DEREFFEIMPNYAKNIVIGFARMNGRTVGIVGNQ). Residues Lys-476 and Lys-491 each carry the N6-acetyllysine; alternate modification. Lys-476 and Lys-491 each carry N6-succinyllysine; alternate.

Belongs to the AccD/PCCB family. As to quaternary structure, the holoenzyme is a dodecamer composed of 6 PCCA/alpha subunits and 6 PCCB/beta subunits.

The protein resides in the mitochondrion matrix. The enzyme catalyses propanoyl-CoA + hydrogencarbonate + ATP = (S)-methylmalonyl-CoA + ADP + phosphate + H(+). The catalysed reaction is butanoyl-CoA + hydrogencarbonate + ATP = (2S)-ethylmalonyl-CoA + ADP + phosphate + H(+). The protein operates within metabolic intermediate metabolism; propanoyl-CoA degradation; succinyl-CoA from propanoyl-CoA: step 1/3. Functionally, this is one of the 2 subunits of the biotin-dependent propionyl-CoA carboxylase (PCC), a mitochondrial enzyme involved in the catabolism of odd chain fatty acids, branched-chain amino acids isoleucine, threonine, methionine, and valine and other metabolites. Propionyl-CoA carboxylase catalyzes the carboxylation of propionyl-CoA/propanoyl-CoA to D-methylmalonyl-CoA/(S)-methylmalonyl-CoA. Within the holoenzyme, the alpha subunit catalyzes the ATP-dependent carboxylation of the biotin carried by the biotin carboxyl carrier (BCC) domain, while the beta subunit then transfers the carboxyl group from carboxylated biotin to propionyl-CoA. Propionyl-CoA carboxylase also significantly acts on butyryl-CoA/butanoyl-CoA, which is converted to ethylmalonyl-CoA/(2S)-ethylmalonyl-CoA. Other alternative minor substrates include (2E)-butenoyl-CoA/crotonoyl-CoA. This is Propionyl-CoA carboxylase beta chain, mitochondrial from Rattus norvegicus (Rat).